The following is a 753-amino-acid chain: 5-methyltetrahydropteroyltriglutamate--homocysteine methyltransferase (753 aa).

Residues 17–20 (RELK) and Lys117 each bind 5-methyltetrahydropteroyltri-L-glutamate. L-homocysteine is bound by residues 431-433 (IGS) and Glu484. L-methionine is bound by residues 431–433 (IGS) and Glu484. 5-methyltetrahydropteroyltri-L-glutamate-binding positions include 515-516 (RC) and Trp561. Asp599 provides a ligand contact to L-homocysteine. Asp599 contributes to the L-methionine binding site. Glu605 is a 5-methyltetrahydropteroyltri-L-glutamate binding site. Zn(2+) contacts are provided by His641, Cys643, and Glu665. The Proton donor role is filled by His694. A Zn(2+)-binding site is contributed by Cys726.

The protein belongs to the vitamin-B12 independent methionine synthase family. The cofactor is Zn(2+).

The catalysed reaction is 5-methyltetrahydropteroyltri-L-glutamate + L-homocysteine = tetrahydropteroyltri-L-glutamate + L-methionine. Its pathway is amino-acid biosynthesis; L-methionine biosynthesis via de novo pathway; L-methionine from L-homocysteine (MetE route): step 1/1. Catalyzes the transfer of a methyl group from 5-methyltetrahydrofolate to homocysteine resulting in methionine formation. This Shigella sonnei (strain Ss046) protein is 5-methyltetrahydropteroyltriglutamate--homocysteine methyltransferase.